A 946-amino-acid polypeptide reads, in one-letter code: Glucoamylase 1 (946 aa).

Positions 1–20 are cleaved as a signal peptide; the sequence is MKLLSKVFVTALGLTSIVNA. N-linked (GlcNAc...) asparagine glycans are attached at residues Asn-51, Asn-68, Asn-97, Asn-187, Asn-244, Asn-373, Asn-393, Asn-406, and Asn-437. Active-site residues include Asp-462 and Glu-465. Residue Asn-505 is glycosylated (N-linked (GlcNAc...) asparagine). A compositionally biased stretch (low complexity) spans 517-532; that stretch reads AATKTTTTTSSSTSTS. The segment at 517–541 is disordered; the sequence is AATKTTTTTSSSTSTSIDGKNTLAP. An N-linked (GlcNAc...) asparagine glycan is attached at Asn-570. The active-site Proton donor is the Asp-628. Asn-704, Asn-772, Asn-801, Asn-895, and Asn-912 each carry an N-linked (GlcNAc...) asparagine glycan.

Belongs to the glycosyl hydrolase 31 family. Post-translationally, the N-terminus is blocked.

It localises to the secreted. The protein resides in the cell wall. Its subcellular location is the membrane. The catalysed reaction is Hydrolysis of terminal (1-&gt;4)-linked alpha-D-glucose residues successively from non-reducing ends of the chains with release of beta-D-glucose.. This is Glucoamylase 1 (GAM1) from Candida albicans (strain SC5314 / ATCC MYA-2876) (Yeast).